We begin with the raw amino-acid sequence, 360 residues long: Probable dual-specificity RNA methyltransferase RlmN (360 aa).

Catalysis depends on Glu-91, which acts as the Proton acceptor. The 239-residue stretch at 97–335 (QHYGQSVCVT…CVVRQEHGTD (239 aa)) folds into the Radical SAM core domain. Cys-104 and Cys-340 are joined by a disulfide. [4Fe-4S] cluster-binding residues include Cys-111, Cys-115, and Cys-118. Residues 163-164 (GE), Ser-195, 218-220 (SLH), and Asn-296 contribute to the S-adenosyl-L-methionine site. The S-methylcysteine intermediate role is filled by Cys-340.

It belongs to the radical SAM superfamily. RlmN family. [4Fe-4S] cluster serves as cofactor.

The protein resides in the cytoplasm. It catalyses the reaction adenosine(2503) in 23S rRNA + 2 reduced [2Fe-2S]-[ferredoxin] + 2 S-adenosyl-L-methionine = 2-methyladenosine(2503) in 23S rRNA + 5'-deoxyadenosine + L-methionine + 2 oxidized [2Fe-2S]-[ferredoxin] + S-adenosyl-L-homocysteine. It carries out the reaction adenosine(37) in tRNA + 2 reduced [2Fe-2S]-[ferredoxin] + 2 S-adenosyl-L-methionine = 2-methyladenosine(37) in tRNA + 5'-deoxyadenosine + L-methionine + 2 oxidized [2Fe-2S]-[ferredoxin] + S-adenosyl-L-homocysteine. Specifically methylates position 2 of adenine 2503 in 23S rRNA and position 2 of adenine 37 in tRNAs. This Streptococcus equi subsp. equi (strain 4047) protein is Probable dual-specificity RNA methyltransferase RlmN.